Here is a 58-residue protein sequence, read N- to C-terminus: Isocitrate lyase (58 aa).

This sequence belongs to the isocitrate lyase/PEP mutase superfamily. Isocitrate lyase family. Homotetramer. Requires Mg(2+) as cofactor.

It localises to the glyoxysome. The enzyme catalyses D-threo-isocitrate = glyoxylate + succinate. It functions in the pathway carbohydrate metabolism; glyoxylate cycle; (S)-malate from isocitrate: step 1/2. Involved in storage lipid mobilization during the growth of higher plant seedling. In Helianthus annuus (Common sunflower), this protein is Isocitrate lyase.